The primary structure comprises 305 residues: MDETLPGSINIRILIPKLMIIIFGLVGLMGNAIVFWLLGFHLRRNAFSVYILNLALADFLFLLSSIIASTLFLLKVSYLSIIFHLCFNTIMMVVYITGISMLSAISTECCLSVLCPTWYRCHRPVHTSTVMCAVIWVLSLLICILNSYFCAVLHTRYDNDNECLATNIFTASYMIFLLVVLCLSSLALLARLFCGAGQMKLTRFHVTILLTLLVFLLCGLPFVIYCILLFKIKDDFHVLDVNFYLALEVLTAINSCANPIIYFFVGSFRHQLKHQTLKMVLQSALQDTPETAENMVEMSSNKAEP.

Residues 1-17 (MDETLPGSINIRILIPK) are Extracellular-facing. Residues 18–38 (LMIIIFGLVGLMGNAIVFWLL) form a helical membrane-spanning segment. At 39 to 53 (GFHLRRNAFSVYILN) the chain is on the cytoplasmic side. A helical membrane pass occupies residues 54–74 (LALADFLFLLSSIIASTLFLL). Residues 75–78 (KVSY) are Extracellular-facing. Residues 79-99 (LSIIFHLCFNTIMMVVYITGI) traverse the membrane as a helical segment. Residues 100–132 (SMLSAISTECCLSVLCPTWYRCHRPVHTSTVMC) are Cytoplasmic-facing. A helical membrane pass occupies residues 133–153 (AVIWVLSLLICILNSYFCAVL). Residues 154 to 167 (HTRYDNDNECLATN) lie on the Extracellular side of the membrane. The chain crosses the membrane as a helical span at residues 168-188 (IFTASYMIFLLVVLCLSSLAL). Topologically, residues 189–207 (LARLFCGAGQMKLTRFHVT) are cytoplasmic. A helical transmembrane segment spans residues 208–228 (ILLTLLVFLLCGLPFVIYCIL). Over 229 to 244 (LFKIKDDFHVLDVNFY) the chain is Extracellular. A helical membrane pass occupies residues 245–265 (LALEVLTAINSCANPIIYFFV). Topologically, residues 266 to 305 (GSFRHQLKHQTLKMVLQSALQDTPETAENMVEMSSNKAEP) are cytoplasmic.

The protein belongs to the G-protein coupled receptor 1 family. Mas subfamily. In terms of tissue distribution, expressed in a subset of sensory neurons that includes nociceptors. Expressed in the subclass of non-peptidergic sensory neurons that are IB4(+) and VR1(-).

It is found in the cell membrane. In terms of biological role, orphan receptor. May be a receptor for RFamide-family neuropeptides such as NPFF and NPAF, which are analgesic in vivo. May regulate nociceptor function and/or development, including the sensation or modulation of pain. The chain is Mas-related G-protein coupled receptor member A2B from Mus musculus (Mouse).